The chain runs to 475 residues: Cysteine--tRNA ligase (475 aa).

Residue Cys-28 coordinates Zn(2+). The 'HIGH' region signature appears at 30–40 (PTVYDETHIGH). Zn(2+) contacts are provided by Cys-208, His-233, and Glu-237. The 'KMSKS' region motif lies at 265 to 269 (KMSKS). Lys-268 provides a ligand contact to ATP.

This sequence belongs to the class-I aminoacyl-tRNA synthetase family. It depends on Zn(2+) as a cofactor.

The protein resides in the cytoplasm. The catalysed reaction is tRNA(Cys) + L-cysteine + ATP = L-cysteinyl-tRNA(Cys) + AMP + diphosphate. The polypeptide is Cysteine--tRNA ligase (Methanococcus vannielii (strain ATCC 35089 / DSM 1224 / JCM 13029 / OCM 148 / SB)).